Reading from the N-terminus, the 464-residue chain is ATP synthase subunit beta (464 aa).

154–161 lines the ATP pocket; it reads GGAGVGKT.

This sequence belongs to the ATPase alpha/beta chains family. F-type ATPases have 2 components, CF(1) - the catalytic core - and CF(0) - the membrane proton channel. CF(1) has five subunits: alpha(3), beta(3), gamma(1), delta(1), epsilon(1). CF(0) has three main subunits: a(1), b(2) and c(9-12). The alpha and beta chains form an alternating ring which encloses part of the gamma chain. CF(1) is attached to CF(0) by a central stalk formed by the gamma and epsilon chains, while a peripheral stalk is formed by the delta and b chains.

It is found in the cell membrane. The catalysed reaction is ATP + H2O + 4 H(+)(in) = ADP + phosphate + 5 H(+)(out). Functionally, produces ATP from ADP in the presence of a proton gradient across the membrane. The catalytic sites are hosted primarily by the beta subunits. The polypeptide is ATP synthase subunit beta (Mycoplasmopsis synoviae (strain 53) (Mycoplasma synoviae)).